Consider the following 265-residue polypeptide: Vegetative storage protein 2 (265 aa).

An N-terminal signal peptide occupies residues 1–18 (MKILSLSLLLLLAATVSA). Asn110, Asn188, and Asn210 each carry an N-linked (GlcNAc...) asparagine glycan.

This sequence belongs to the APS1/VSP family. Highly expressed in flowers, but also found in leaves, vegetative shoots, petioles, peduncles, and receptacles of floral organs.

In terms of biological role, may function as somatic storage protein during early seedling development. In Arabidopsis thaliana (Mouse-ear cress), this protein is Vegetative storage protein 2 (VSP2).